A 335-amino-acid polypeptide reads, in one-letter code: Eukaryotic translation initiation factor 3 subunit I (335 aa).

WD repeat units follow at residues 8–47 (GHER…RLGT), 50–91 (GHQG…KVWD), 145–184 (CTES…QLEN), 189–228 (EFDN…ILKT), and 286–325 (GHFG…FDFM).

Belongs to the eIF-3 subunit I family. As to quaternary structure, component of the eukaryotic translation initiation factor 3 (eIF-3) complex.

The protein localises to the cytoplasm. Its function is as follows. Component of the eukaryotic translation initiation factor 3 (eIF-3) complex, which is involved in protein synthesis of a specialized repertoire of mRNAs and, together with other initiation factors, stimulates binding of mRNA and methionyl-tRNAi to the 40S ribosome. The eIF-3 complex specifically targets and initiates translation of a subset of mRNAs involved in cell proliferation. This is Eukaryotic translation initiation factor 3 subunit I (tif34) from Aspergillus oryzae (strain ATCC 42149 / RIB 40) (Yellow koji mold).